A 269-amino-acid polypeptide reads, in one-letter code: Microtubule-associated protein RP/EB family member 1 (269 aa).

Positions Asn14–Asp116 constitute a Calponin-homology (CH) domain. The disordered stretch occupies residues Arg168–Gly190. The EB1 C-terminal domain maps to Thr186 to Ile256.

Belongs to the MAPRE family.

It is found in the cytoplasm. The protein resides in the cytoskeleton. It localises to the microtubule organizing center. Its subcellular location is the centrosome. The protein localises to the golgi apparatus. It is found in the spindle. The protein resides in the spindle pole. Its function is as follows. Plus-end tracking protein (+TIP) that binds to the plus-end of microtubules and regulates the dynamics of the microtubule cytoskeleton. Promotes cytoplasmic microtubule nucleation and elongation. Involved in mitotic spindle positioning by stabilizing microtubules and promoting dynamic connection between astral microtubules and the cortex during mitotic chromosome segregation. This chain is Microtubule-associated protein RP/EB family member 1 (mapre1), found in Xenopus tropicalis (Western clawed frog).